Reading from the N-terminus, the 948-residue chain is MDKTYQPHAIETSWYQTWESENYFAPQGAGDSYTIMIPPPNVTGSLHMGHGFNNAIMDALIRFRRMQGRNTLWQPGTDHAGIATQMLVERQIEAQGQNRHDLGREKFLEKVWEWKDQSGGNISRQIRRLGSSVDWSRERFTMDDGLSEAVKEAFVRLHEDGLIYRGKRLVNWDTKLHTAISDLEVENHDEKGFLWNLKYPLADGAKTAEGNDYLIVATTRPETMLGDSAVAVNPEDERYKALIGKFVELPLVGRRIPIIADDYCDPEFGTGCVKITPAHDFNDYEVGKRHNLPLLNIFDKNAAVLPACQVFNLDGSLNDSVDGKIPAEYVGLDRFEARKQIVAAFDAAGLLVSVDDHALKVPKGDRSGTVIEPWLTDQWYVSTKPLAEPAIAAVEDGRIAFVPKQYENMYFSWMRDIQDWCISRQLWWGHRIPAWYDESGKVYVGRDEAEVRAKHNLGPDVALQQDNDVLDTWFSSGLWTFSTLGWPEQTDFLKTFHPTDVLVTGFDIIFFWVARMIMLTMHLVKNEDGTPQVPFKTVYVHGLVRDGQGQKMSKSKGNVLDPLDIIDGIDLETLVQKRTTGLMQPKLQKAIEKQTRAEFADGIASYGTDALRFTFCSLATTGRDIKFDMGRVEGYRNFCNKIWNAARYVLDKGEDCGQNGEAYELSLADRWIISQLQRTEAEVTRQLDQFRFDLAAQALYEFIWNQYCDWYLELSKPVLWDENSPVERQRGTRRTLVRVLEVALRLAHPFMPFITEEIWQRLAPLAGSTGKTIMLQPWPVANETRIDQGAEDDIEWLKGLMLGTRNIRAEMNIGPGKPLALFLKNVSAEDQRRLTENEALLKKLARLESITVLAAGDEAPLSATALVGEMEVLVPMAGLIDKGAELARLDKEIQRLQGEVQRVGGKLSNPSFVDKAPAEVIEKERAKLAEAEQALGKLAEQHARISSL.

Residues proline 40 to histidine 50 carry the 'HIGH' region motif. The 'KMSKS' region motif lies at lysine 551 to serine 555. Residue lysine 554 participates in ATP binding. Residues leucine 879–serine 947 adopt a coiled-coil conformation.

Belongs to the class-I aminoacyl-tRNA synthetase family. ValS type 1 subfamily. As to quaternary structure, monomer.

It localises to the cytoplasm. It catalyses the reaction tRNA(Val) + L-valine + ATP = L-valyl-tRNA(Val) + AMP + diphosphate. In terms of biological role, catalyzes the attachment of valine to tRNA(Val). As ValRS can inadvertently accommodate and process structurally similar amino acids such as threonine, to avoid such errors, it has a 'posttransfer' editing activity that hydrolyzes mischarged Thr-tRNA(Val) in a tRNA-dependent manner. This is Valine--tRNA ligase from Pseudomonas fluorescens (strain ATCC BAA-477 / NRRL B-23932 / Pf-5).